The chain runs to 313 residues: Ribosomal RNA small subunit methyltransferase H (313 aa).

S-adenosyl-L-methionine-binding positions include 35 to 37, aspartate 55, phenylalanine 80, aspartate 102, and glutamine 109; that span reads GGH.

It belongs to the methyltransferase superfamily. RsmH family.

It is found in the cytoplasm. The enzyme catalyses cytidine(1402) in 16S rRNA + S-adenosyl-L-methionine = N(4)-methylcytidine(1402) in 16S rRNA + S-adenosyl-L-homocysteine + H(+). Specifically methylates the N4 position of cytidine in position 1402 (C1402) of 16S rRNA. The sequence is that of Ribosomal RNA small subunit methyltransferase H from Shewanella sp. (strain MR-4).